Consider the following 100-residue polypeptide: Small ribosomal subunit protein uS14 (100 aa).

Belongs to the universal ribosomal protein uS14 family. Part of the 30S ribosomal subunit. Contacts proteins S3 and S10.

Functionally, binds 16S rRNA, required for the assembly of 30S particles and may also be responsible for determining the conformation of the 16S rRNA at the A site. The protein is Small ribosomal subunit protein uS14 of Acaryochloris marina (strain MBIC 11017).